We begin with the raw amino-acid sequence, 348 residues long: Killer cell immunoglobulin-like receptor 2DL1 (348 aa).

A signal peptide spans 1–21 (MSLLVVSMACVGFFLLQGAWP). The Extracellular segment spans residues 22–245 (HEGVHRKPSL…SKTGNPRHLH (224 aa)). Ig-like C2-type domains follow at residues 42 to 107 (EETV…VTHS) and 142 to 205 (GENV…FHDS). Cysteines 49 and 100 form a disulfide. Residues asparagine 67, asparagine 84, asparagine 144, and asparagine 178 are each glycosylated (N-linked (GlcNAc...) asparagine). An intrachain disulfide couples cysteine 149 to cysteine 198. Positions 220 to 239 (VTGNPSNSWPSPTEPSSKTG) are disordered. The chain crosses the membrane as a helical span at residues 246 to 264 (ILIGTSVVIILFILLFFLL). The Cytoplasmic portion of the chain corresponds to 265-348 (HRWCSNKKNA…ESRSKVVSCP (84 aa)).

It belongs to the immunoglobulin superfamily. As to quaternary structure, interacts with ARRB2. Interacts with PTPN6; the interaction is enhanced by ARRB2. Interacts with PTPN11; the interaction is enhanced by ARRB2. Expressed by NK cells.

The protein localises to the cell membrane. Receptor on natural killer (NK) cells for some HLA-C alleles such as w4 and w6. Inhibits the activity of NK cells thus preventing cell lysis. The chain is Killer cell immunoglobulin-like receptor 2DL1 from Homo sapiens (Human).